The following is a 331-amino-acid chain: Vitamin B12 import system permease protein BtuC (331 aa).

The next 7 membrane-spanning stretches (helical) occupy residues 21-43 (LALL…ERWI), 63-85 (PRTL…MQAV), 90-112 (LAEP…TVLL), 116-138 (LLPV…FLLL), 151-173 (LLIG…YFST), 193-210 (WRHG…LWLS), and 239-261 (VLVL…IAFI).

This sequence belongs to the binding-protein-dependent transport system permease family. FecCD subfamily. As to quaternary structure, the complex is composed of two ATP-binding proteins (BtuD), two transmembrane proteins (BtuC) and a solute-binding protein (BtuF).

It localises to the cell inner membrane. In terms of biological role, part of the ABC transporter complex BtuCDF involved in vitamin B12 import. Involved in the translocation of the substrate across the membrane. This Pectobacterium atrosepticum (strain SCRI 1043 / ATCC BAA-672) (Erwinia carotovora subsp. atroseptica) protein is Vitamin B12 import system permease protein BtuC.